Consider the following 383-residue polypeptide: Heterogeneous nuclear rnp K-like protein 2 (383 aa).

3 KH domains span residues 58–122 (NITF…LGQV), 161–226 (IGNL…INEI), and 256–321 (QVSQ…QTML). The interval 332–383 (REEHEASLKDGSSVPAAAAASAATSISASGANQNDSIHTPVSDNESPVVFTE) is disordered. Residues 343 to 362 (SSVPAAAAASAATSISASGA) show a composition bias toward low complexity. Residues 363–376 (NQNDSIHTPVSDNE) are compositionally biased toward polar residues.

This sequence belongs to the HEK2 family. As to quaternary structure, binds RNA.

It is found in the cytoplasm. It localises to the P-body. Its subcellular location is the nucleus. The protein localises to the chromosome. The protein resides in the telomere. Its function is as follows. RNA-binding protein involved in the correct localization of transcripts in the cell. RNA localization is a widespread mechanism for achieving localized protein synthesis. Involved in structural and functional organization of telomeric chromatin and regulates silencing at the HMR locus. This Kluyveromyces lactis (strain ATCC 8585 / CBS 2359 / DSM 70799 / NBRC 1267 / NRRL Y-1140 / WM37) (Yeast) protein is Heterogeneous nuclear rnp K-like protein 2 (HEK2).